We begin with the raw amino-acid sequence, 279 residues long: MKENEKIIMEKGIHTDFKENMTYGEYLQLDSLLSSQKRLSDHHDEMLFIVIHQASELWMKLILHELYAAIESIKQDKLQPAFKMLARVSKIQSQIIQSWDILATLTPSEYIEFRDSLGQASGFQSYQYRMIEYALGYKTPHALKIYEKDPELHARLHTALHAPSLYDVAIQALVKEGFPIHKDVLNRDITQPYEEDATVEAAWLEVYADVKKYWNLYQLAEKLIDIEDWLQQWRFRHMKTVERIIGHKMGTGGSSGVSYLKRVLDQRFFPELWNVRTKL.

Residues 48–52 (FIVIH), Tyr-110, and Arg-114 each bind substrate. A heme-binding site is contributed by His-237. Residue Thr-251 coordinates substrate.

It belongs to the tryptophan 2,3-dioxygenase family. Homotetramer. It depends on heme as a cofactor.

The catalysed reaction is L-tryptophan + O2 = N-formyl-L-kynurenine. It functions in the pathway amino-acid degradation; L-tryptophan degradation via kynurenine pathway; L-kynurenine from L-tryptophan: step 1/2. Heme-dependent dioxygenase that catalyzes the oxidative cleavage of the L-tryptophan (L-Trp) pyrrole ring and converts L-tryptophan to N-formyl-L-kynurenine. Catalyzes the oxidative cleavage of the indole moiety. The chain is Tryptophan 2,3-dioxygenase from Bacillus cereus (strain ATCC 10987 / NRS 248).